Here is a 572-residue protein sequence, read N- to C-terminus: Na(+)/citrate cotransporter (572 aa).

A run of 8 helical transmembrane segments spans residues 13 to 33 (SFAILLFTPILMLPLVILIPD), 53 to 73 (VIPVAVTSLLPVLLFPLLKVL), 80 to 100 (IQYMKDTNMLFLGSLIVAVAV), 124 to 144 (LMLGFMFVTAFLSMWISNTAA), 218 to 238 (SASIGGTATLTGTGPNVVLLG), 255 to 275 (SWFGFAFPNMVMMLVLAWLWL), 315 to 335 (SLSYPECNVLFCFTLLVILWF), and 357 to 377 (HITDATVAIFVAILLFIIPSQ). N-linked (GlcNAc...) asparagine glycosylation occurs at Asn-382. 4 consecutive transmembrane segments (helical) span residues 410-430 (VPWDIVLLLGGGFAMAKGCET), 443-463 (PLRLVKPAVITLILSCLVAMT), 491-511 (PLYVMIPCTMSASLAFMLPVA), and 532-552 (TGLIMNFVGILSVFLSVNTWG). Residue Asn-566 is glycosylated (N-linked (GlcNAc...) asparagine).

Belongs to the SLC13A/DASS transporter (TC 2.A.47) family. NADC subfamily. As to quaternary structure, homodimer.

It is found in the cell membrane. It carries out the reaction citrate(out) + 4 Na(+)(out) = citrate(in) + 4 Na(+)(in). Its activity is regulated as follows. Inhibited by Li(+). Functionally, high-affinity sodium/citrate cotransporter that mediates citrate entry into cells, which is a critical participant of biochemical pathways. May function in various metabolic processes in which citrate has a critical role such as energy production (Krebs cycle), fatty acid synthesis, cholesterol synthesis, glycolysis, and gluconeogenesis. Transports citrate into the cell in a Na(+)-dependent manner, recognizing the trivalent form of citrate (physiological pH) rather than the divalent form. Can recognizes succinate as a substrate, but its affinity for succinate is several fold lower than for citrate. The stoichiometry is probably 4 Na(+) for each carboxylate, irrespective of whether the translocated substrate is divalent or trivalent, rendering the process electrogenic. Involved in the regulation of citrate levels in the brain. This chain is Na(+)/citrate cotransporter (Slc13a5), found in Mus musculus (Mouse).